The sequence spans 249 residues: Secretion system apparatus lipoprotein SsaJ (249 aa).

Positions M1–A18 are cleaved as a signal peptide. C19 is lipidated: N-palmitoyl cysteine. C19 carries the S-diacylglycerol cysteine lipid modification. A helical transmembrane segment spans residues L225 to L245.

It belongs to the YscJ lipoprotein family.

It localises to the cell outer membrane. In terms of biological role, component of Salmonella pathogenicity island 2 (SPI-2) type III secretion system, required for secretion of some type III-secreted effectors including the SpvB exotoxin. The sequence is that of Secretion system apparatus lipoprotein SsaJ (ssaJ) from Salmonella typhimurium (strain 14028s / SGSC 2262).